A 512-amino-acid chain; its full sequence is 2,3-bisphosphoglycerate-independent phosphoglycerate mutase (512 aa).

Positions 13 and 63 each coordinate Mn(2+). Serine 63 (phosphoserine intermediate) is an active-site residue. Residues histidine 124, 154-155 (RD), arginine 186, arginine 192, 262-265 (RPDR), and lysine 337 each bind substrate. Residues aspartate 404, histidine 408, aspartate 445, histidine 446, and histidine 463 each contribute to the Mn(2+) site.

It belongs to the BPG-independent phosphoglycerate mutase family. Monomer. Requires Mn(2+) as cofactor.

It carries out the reaction (2R)-2-phosphoglycerate = (2R)-3-phosphoglycerate. It participates in carbohydrate degradation; glycolysis; pyruvate from D-glyceraldehyde 3-phosphate: step 3/5. Its function is as follows. Essential for rapid growth and for sporulation. Catalyzes the interconversion of 2-phosphoglycerate and 3-phosphoglycerate. This Oceanobacillus iheyensis (strain DSM 14371 / CIP 107618 / JCM 11309 / KCTC 3954 / HTE831) protein is 2,3-bisphosphoglycerate-independent phosphoglycerate mutase.